Here is a 210-residue protein sequence, read N- to C-terminus: Neuroendocrine protein 7B2 (210 aa).

Residues 1–24 (MTSRMAILSGLLFWLLLEWNPAFA) form the signal peptide. Residues C118 and C128 are joined by a disulfide bond. A phosphoserine mark is found at S139 and S203.

The protein belongs to the 7B2 family. As to quaternary structure, interacts with PCSK2/PC2 early in the secretory pathway. Dissociation occurs at later stages. Proteolytically cleaved in the Golgi by a furin-like convertase to generate bioactive peptides. In terms of processing, sulfated on tyrosine residues.

It localises to the secreted. In terms of biological role, acts as a molecular chaperone for PCSK2/PC2, preventing its premature activation in the regulated secretory pathway. Binds to inactive PCSK2 in the endoplasmic reticulum and facilitates its transport from there to later compartments of the secretory pathway where it is proteolytically matured and activated. Also required for cleavage of PCSK2 but does not appear to be involved in its folding. Plays a role in regulating pituitary hormone secretion. The C-terminal peptide inhibits PCSK2 in vitro. The protein is Neuroendocrine protein 7B2 (Scg5) of Rattus norvegicus (Rat).